A 479-amino-acid polypeptide reads, in one-letter code: Poly(A) polymerase catalytic subunit (479 aa).

Residues aspartate 202 and aspartate 204 contribute to the active site. Ca(2+) is bound by residues aspartate 202, aspartate 204, and aspartate 253.

It belongs to the poxviridae poly(A) polymerase catalytic subunit family. In terms of assembly, heterodimer of a large (catalytic) subunit and a small (regulatory) subunit.

It carries out the reaction RNA(n) + ATP = RNA(n)-3'-adenine ribonucleotide + diphosphate. In terms of biological role, polymerase that creates the 3'-poly(A) tail of mRNA's. This Bos taurus (Bovine) protein is Poly(A) polymerase catalytic subunit (OPG063).